Reading from the N-terminus, the 67-residue chain is Small, acid-soluble spore protein B (67 aa).

This sequence belongs to the alpha/beta-type SASP family.

SASP are bound to spore DNA. They are double-stranded DNA-binding proteins that cause DNA to change to an a-like conformation. They protect the DNA backbone from chemical and enzymatic cleavage and are thus involved in dormant spore's high resistance to UV light. The polypeptide is Small, acid-soluble spore protein B (sspB) (Bacillus subtilis (strain 168)).